The primary structure comprises 104 residues: Large ribosomal subunit protein bL21 (104 aa).

This sequence belongs to the bacterial ribosomal protein bL21 family. In terms of assembly, part of the 50S ribosomal subunit. Contacts protein L20.

Its function is as follows. This protein binds to 23S rRNA in the presence of protein L20. The protein is Large ribosomal subunit protein bL21 of Tropheryma whipplei (strain Twist) (Whipple's bacillus).